The primary structure comprises 397 residues: 1-deoxy-D-xylulose 5-phosphate reductoisomerase (397 aa).

7 residues coordinate NADPH: T17, G18, S19, I20, A45, N47, and N130. K131 contributes to the 1-deoxy-D-xylulose 5-phosphate binding site. E132 is a binding site for NADPH. D156 lines the Mn(2+) pocket. 1-deoxy-D-xylulose 5-phosphate contacts are provided by S157, E158, S182, and H205. E158 lines the Mn(2+) pocket. G211 lines the NADPH pocket. The 1-deoxy-D-xylulose 5-phosphate site is built by S218, N223, K224, and E227. E227 contacts Mn(2+).

The protein belongs to the DXR family. Mg(2+) is required as a cofactor. Mn(2+) serves as cofactor.

It carries out the reaction 2-C-methyl-D-erythritol 4-phosphate + NADP(+) = 1-deoxy-D-xylulose 5-phosphate + NADPH + H(+). The protein operates within isoprenoid biosynthesis; isopentenyl diphosphate biosynthesis via DXP pathway; isopentenyl diphosphate from 1-deoxy-D-xylulose 5-phosphate: step 1/6. Its function is as follows. Catalyzes the NADPH-dependent rearrangement and reduction of 1-deoxy-D-xylulose-5-phosphate (DXP) to 2-C-methyl-D-erythritol 4-phosphate (MEP). The polypeptide is 1-deoxy-D-xylulose 5-phosphate reductoisomerase (Agrobacterium fabrum (strain C58 / ATCC 33970) (Agrobacterium tumefaciens (strain C58))).